A 175-amino-acid chain; its full sequence is MEKLTDLNYTLSVITLMNNTLHTILEDPGMAYFPYIASVLTGLFALNKASIPTMKIALKTSKCSYKVVKYCIVTIFNTLLKLAGYKEQITTKDEIEKQMDRVVKEMRRQLEMIDKLTTREIEQVELLKRIYDKLTVQTTGEIDMTKEINQKNVRTLEEWESGKNPYEPREVTAAM.

Residues 1-28 are Lumenal-facing; it reads MEKLTDLNYTLSVITLMNNTLHTILEDP. 2 N-linked (GlcNAc...) asparagine; by host glycosylation sites follow: Asn-8 and Asn-18. Residues 29-51 traverse the membrane as a helical; Signal-anchor for type III membrane protein segment; the sequence is GMAYFPYIASVLTGLFALNKASI. Topologically, residues 52 to 175 are cytoplasmic; the sequence is PTMKIALKTS…YEPREVTAAM (124 aa). Glu-120 and Gln-123 together coordinate Ca(2+). A required for interaction with microtubules region spans residues 122 to 175; that stretch reads EQVELLKRIYDKLTVQTTGEIDMTKEINQKNVRTLEEWESGKNPYEPREVTAAM. Residues 159–175 form an ICP binding domain region; sequence WESGKNPYEPREVTAAM.

It belongs to the rotavirus NSP4 family. As to quaternary structure, homotetramer. Interacts with the immature particle in the viroplasm. Interacts with host CAV1, early and late in infection. Interacts with host integrin ITGA1/ITGB1 heterodimer. Interacts with host integrin ITGA2/ITGB1 heterodimer. Interaction with microtubules blocks trafficking to the Golgi apparatus. In terms of processing, the N-glycosyl content is primarily Man(9)GlcNAc, with a small amount of Man(8)GlcNAc.

Its subcellular location is the host rough endoplasmic reticulum membrane. It is found in the host membrane. The protein localises to the host caveola. The protein resides in the secreted. Plays an essential role in the virus replication cycle by acting as a viroporin. Creates a pore in the host endoplasmic reticulum and as a consequence releases Ca(2+) in the cytoplasm of infected cell. In turn, high levels of cytoplasmic calcium trigger membrane trafficking and transport of viral ER-associated proteins to viroplasms, sites of viral genome replication and immature particle assembly. Functionally, the secreted form acts as an enterotoxin that causes phospholipase C-dependent elevation of the intracellular calcium concentration in host intestinal mucosa cells. Increased concentration of intracellular calcium disrupts the cytoskeleton and the tight junctions, raising the paracellular permeability. Potentiates chloride ion secretion through a calcium ion-dependent signaling pathway, inducing age-dependent diarrhea. To perform this enterotoxigenic role in vivo, NSP4 is released from infected enterocytes in a soluble form capable of diffusing within the intestinal lumen and interacting with host plasma membrane receptors on neighboring epithelial cells such as integrins ITGA1/ITGB1 and ITGA2/ITGB1. The protein is Non-structural glycoprotein 4 of Rotavirus A (strain RVA/SA11-Both/G3P5B[2]) (RV-A).